A 333-amino-acid chain; its full sequence is Flotillin-like protein FloA (333 aa).

A helical membrane pass occupies residues 9–29 (IVLIVGGIIFLILFFHYVPFF).

The protein belongs to the flotillin-like FloA family. As to quaternary structure, homooligomerizes.

The protein localises to the cell membrane. It is found in the membrane raft. Its function is as follows. Found in functional membrane microdomains (FMM) that may be equivalent to eukaryotic membrane rafts. FMMs are highly dynamic and increase in number as cells age. Flotillins are thought to be important factors in membrane fluidity. The protein is Flotillin-like protein FloA of Bacteroides thetaiotaomicron (strain ATCC 29148 / DSM 2079 / JCM 5827 / CCUG 10774 / NCTC 10582 / VPI-5482 / E50).